We begin with the raw amino-acid sequence, 202 residues long: Glycerol-3-phosphate acyltransferase 1 (202 aa).

A run of 5 helical transmembrane segments spans residues A8–G28, L85–L105, I122–A142, Q146–A166, and A173–I190.

The protein belongs to the PlsY family. As to quaternary structure, probably interacts with PlsX.

Its subcellular location is the cell membrane. It carries out the reaction an acyl phosphate + sn-glycerol 3-phosphate = a 1-acyl-sn-glycero-3-phosphate + phosphate. Its pathway is lipid metabolism; phospholipid metabolism. Its function is as follows. Catalyzes the transfer of an acyl group from acyl-phosphate (acyl-PO(4)) to glycerol-3-phosphate (G3P) to form lysophosphatidic acid (LPA). This enzyme utilizes acyl-phosphate as fatty acyl donor, but not acyl-CoA or acyl-ACP. In Desulfitobacterium hafniense (strain Y51), this protein is Glycerol-3-phosphate acyltransferase 1.